Consider the following 61-residue polypeptide: uncharacterized protein (61 aa).

This is an uncharacterized protein from Archaeoglobus fulgidus (strain ATCC 49558 / DSM 4304 / JCM 9628 / NBRC 100126 / VC-16).